The sequence spans 747 residues: Cysteine--tRNA ligase, cytoplasmic (747 aa).

The interval 1-26 (MTESWEQGKGRRTQPPWSAPNTNEQP) is disordered. A compositionally biased stretch (polar residues) spans 15–25 (PPWSAPNTNEQ). Cys54 contacts Zn(2+). Gly55 is a binding site for L-cysteine. The 'HIGH' region signature appears at 56–66 (PTVYDASHMGH). Thr95 lines the L-cysteine pocket. The 'KIIK' region signature appears at 100–103 (KIIK). Zn(2+) contacts are provided by Cys347, His372, and Glu376. Position 372 (His372) interacts with L-cysteine. The 'KMSKS' region motif lies at 405–409 (KMSKS). An ATP-binding site is contributed by Lys408. Over residues 651-683 (EEKRKAEEEKQRKKEEAARKKQQQEAAKLEKMK) the composition is skewed to basic and acidic residues. Disordered regions lie at residues 651-685 (EEKR…MKIS) and 700-721 (FDES…GQTK).

It belongs to the class-I aminoacyl-tRNA synthetase family. Homodimer. It depends on Zn(2+) as a cofactor.

It is found in the cytoplasm. It catalyses the reaction tRNA(Cys) + L-cysteine + ATP = L-cysteinyl-tRNA(Cys) + AMP + diphosphate. Catalyzes the ATP-dependent ligation of cysteine to tRNA(Cys). The chain is Cysteine--tRNA ligase, cytoplasmic (cars1) from Xenopus laevis (African clawed frog).